We begin with the raw amino-acid sequence, 507 residues long: Histidine ammonia-lyase (507 aa).

The segment at residues 141–143 (ASG) is a cross-link (5-imidazolinone (Ala-Gly)). S142 is modified (2,3-didehydroalanine (Ser)).

It belongs to the PAL/histidase family. Contains an active site 4-methylidene-imidazol-5-one (MIO), which is formed autocatalytically by cyclization and dehydration of residues Ala-Ser-Gly.

Its subcellular location is the cytoplasm. The enzyme catalyses L-histidine = trans-urocanate + NH4(+). The protein operates within amino-acid degradation; L-histidine degradation into L-glutamate; N-formimidoyl-L-glutamate from L-histidine: step 1/3. The sequence is that of Histidine ammonia-lyase from Paraburkholderia phytofirmans (strain DSM 17436 / LMG 22146 / PsJN) (Burkholderia phytofirmans).